A 129-amino-acid polypeptide reads, in one-letter code: Cytochrome b5 (129 aa).

Positions Thr8–Lys84 constitute a Cytochrome b5 heme-binding domain. The heme site is built by His43 and His67. Residues Gly104 to Tyr124 traverse the membrane as a helical segment.

This sequence belongs to the cytochrome b5 family.

The protein localises to the endoplasmic reticulum membrane. It localises to the microsome membrane. Membrane bound hemoprotein which function as an electron carrier for several membrane bound oxygenases. In Candida tropicalis (Yeast), this protein is Cytochrome b5 (Cytb5).